The sequence spans 487 residues: b(0,+)-type amino acid transporter 1 (487 aa).

Residues 1 to 15 are compositionally biased toward basic and acidic residues; sequence MGDTGLRKRREDEKS. The tract at residues 1 to 22 is disordered; it reads MGDTGLRKRREDEKSIQSQEPK. At 1 to 31 the chain is on the cytoplasmic side; it reads MGDTGLRKRREDEKSIQSQEPKTTSLQKELG. Ser18 carries the phosphoserine modification. Residues 32–55 form a helical membrane-spanning segment; it reads LISGISIIVGTIIGSGIFVSPKSV. Residue 43-47 coordinates L-arginine; that stretch reads IIGSG. The Extracellular portion of the chain corresponds to 56–62; the sequence is LSNTEAV. Residues 63–84 form a helical membrane-spanning segment; that stretch reads GPCLIIWAACGVLATLGALCFA. Residues 85 to 110 are Cytoplasmic-facing; it reads ELGTMITKSGGEYPYLMEAYGPIPAY. Residues 111 to 137 form a helical membrane-spanning segment; sequence LFSWASLIVIKPTSFAIICLSFSEYVC. At 138–147 the chain is on the extracellular side; the sequence is APFYVGCKPP. A run of 2 helical transmembrane segments spans residues 148–169 and 170–193; these read QIVVKCLAAAAILFISTVNSLS and VRLGSYVQNIFTAAKLVIVAIIII. Residues 194 to 217 lie on the Extracellular side of the membrane; sequence SGLVLLAQGNTKNFDNSFEGAQLS. Residues 218 to 238 form a helical membrane-spanning segment; it reads VGAISLAFYNGLWAYDGWNQL. Asp233 serves as a coordination point for L-arginine. Over 239-251 the chain is Cytoplasmic; the sequence is NYITEELRNPYRN. The chain crosses the membrane as a helical span at residues 252 to 274; it reads LPLAIIIGIPLVTACYILMNVSY. Residues 275 to 302 are Extracellular-facing; the sequence is FTVMTATELLQSQAVAVTFGDRVLYPAS. The helical transmembrane segment at 303-325 threads the bilayer; the sequence is WIVPLFVAFSTIGAANGTCFTAG. The Cytoplasmic portion of the chain corresponds to 326-351; that stretch reads RLIYVAGREGHMLKVLSYISVRRLTP. 2 helical membrane-spanning segments follow: residues 352 to 370 and 371 to 391; these read APAIIFYGIIATIYIIPGD and INSLVNYFSFAAWLFYGLTIL. Topologically, residues 392–410 are cytoplasmic; sequence GLIVMRFTRKELERPIKVP. The helical transmembrane segment at 411 to 431 threads the bilayer; sequence VVIPVLMTLISVFLVLAPIIS. Over 432 to 434 the chain is Extracellular; it reads KPT. Residues 435-450 form a helical membrane-spanning segment; it reads WEYLYCVLFILSGLLF. Residues 451-487 lie on the Cytoplasmic side of the membrane; it reads YFLFVHYKFGWAQKISKPITMHLQMLMEVVPPEEDPE.

The protein belongs to the amino acid-polyamine-organocation (APC) superfamily. As to quaternary structure, disulfide-linked heterodimer composed of the catalytic light chain subunit SLC7A9 and the heavy chain subunit SLC3A1. The heterodimer is the minimal functional unit. Assembles in heterotetramers (dimers of heterodimers) and higher order oligomers; the oligomerization is mediated by SLC3A1 likely to prevent degradation and facilitate heteromer trafficking to the plasma membrane. Interacts with CAV1. As to expression, expressed in the brush border membrane in the kidney (at protein level). Kidney, small intestine, liver and placenta.

It localises to the apical cell membrane. The protein localises to the cell membrane. It catalyses the reaction L-leucine(out) + L-arginine(in) = L-leucine(in) + L-arginine(out). The enzyme catalyses L-histidine(out) + L-arginine(in) = L-histidine(in) + L-arginine(out). It carries out the reaction L-arginine(in) + L-phenylalanine(out) = L-arginine(out) + L-phenylalanine(in). The catalysed reaction is L-cysteine(out) + L-arginine(in) = L-cysteine(in) + L-arginine(out). It catalyses the reaction L-cystine(out) + L-arginine(in) = L-cystine(in) + L-arginine(out). The enzyme catalyses L-lysine(out) + L-arginine(in) = L-lysine(in) + L-arginine(out). In terms of biological role, associates with SLC3A1 to form a functional transporter complex that mediates the electrogenic exchange between cationic amino acids and neutral amino acids, with a stoichiometry of 1:1. Has system b(0,+)-like activity with high affinity for extracellular cationic amino acids and L-cystine and lower affinity for intracellular neutral amino acids. Substrate exchange is driven by high concentration of intracellular neutral amino acids and the intracellular reduction of L-cystine to L-cysteine. Required for reabsorption of L-cystine and dibasic amino acids across the brush border membrane in renal proximal tubules. This Homo sapiens (Human) protein is b(0,+)-type amino acid transporter 1.